The chain runs to 284 residues: Homeobox protein SIX1 (284 aa).

The segment at residues 124–183 (GEETSYCFKEKSRGVLREWYAHNPYPSPREKRELAEATGLTTTQVSNWFKNRRQRDRAAE) is a DNA-binding region (homeobox). Residues 168 to 284 (VSNWFKNRRQ…LTSSLVDLGS (117 aa)) are disordered. Positions 179-190 (DRAAEAKERENT) are enriched in basic and acidic residues. Positions 227 to 284 (DQNSVLLLQSNMGHARSSNYSLPGLTASQPSHGLQAHQHQLQDSLLGPLTSSLVDLGS) are enriched in polar residues.

The protein belongs to the SIX/Sine oculis homeobox family. Interacts with DACH1. Interacts with EYA1. Interacts with EYA2. Interacts with CDH1. Interacts with TBX18. Interacts with CEBPA. Interacts with CEBPB. Interacts with EBF2. Post-translationally, phosphorylated during interphase; becomes hyperphosphorylated during mitosis. Hyperphosphorylation impairs binding to promoter elements. Ubiquitinated by the anaphase promoting complex (APC), leading to its proteasomal degradation. As to expression, expressed in phalangeal tendons and in skeletal muscle and in head and body mesenchyme.

It is found in the nucleus. It localises to the cytoplasm. Its function is as follows. Transcription factor that is involved in the regulation of cell proliferation, apoptosis and embryonic development. Plays an important role in the development of several organs, including kidney, muscle and inner ear. Depending on context, functions as a transcriptional repressor or activator. Lacks an activation domain, and requires interaction with EYA family members for transcription activation. Mediates nuclear translocation of EYA1 and EYA2. Binds the 5'-TCA[AG][AG]TTNC-3' motif present in the MEF3 element in the MYOG promoter and CIDEA enhancer. Regulates the expression of numerous genes, including MYC, CCNA1, CCND1 and EZR. Acts as an activator of the IGFBP5 promoter, probably coactivated by EYA2. Repression of precursor cell proliferation in myoblasts is switched to activation through recruitment of EYA3 to the SIX1-DACH1 complex. During myogenesis, seems to act together with EYA2 and DACH2. Regulates the expression of CCNA1. Promotes brown adipocyte differentiation. In Mus musculus (Mouse), this protein is Homeobox protein SIX1 (Six1).